Here is a 549-residue protein sequence, read N- to C-terminus: Chaperonin GroEL (549 aa).

ATP-binding positions include 30-33, Lys-51, 87-91, Gly-415, 479-481, and Asp-495; these read TLGP, DGTTT, and NAA.

This sequence belongs to the chaperonin (HSP60) family. Forms a cylinder of 14 subunits composed of two heptameric rings stacked back-to-back. Interacts with the co-chaperonin GroES.

The protein localises to the cytoplasm. The catalysed reaction is ATP + H2O + a folded polypeptide = ADP + phosphate + an unfolded polypeptide.. In terms of biological role, together with its co-chaperonin GroES, plays an essential role in assisting protein folding. The GroEL-GroES system forms a nano-cage that allows encapsulation of the non-native substrate proteins and provides a physical environment optimized to promote and accelerate protein folding. The protein is Chaperonin GroEL of Stenotrophomonas maltophilia (strain R551-3).